Consider the following 501-residue polypeptide: Lycopene beta cyclase, chloroplastic (501 aa).

The transit peptide at 1–48 directs the protein to the chloroplast; sequence MDTLLKTPNKLDFFIPQFHGFERLCSNNPYHSRVRLGVKKRAIKIVSS. V49 bears the N-acetylvaline mark. 85 to 113 is a binding site for NAD(+); the sequence is LAIVGGGPAGLAVAQQVSEAGLSVCSIDP.

The protein belongs to the lycopene cyclase family.

It is found in the plastid. The protein resides in the chloroplast. It carries out the reaction a carotenoid psi-end group = a carotenoid beta-end derivative. Its pathway is carotenoid biosynthesis; beta-carotene biosynthesis. The protein operates within carotenoid biosynthesis; beta-zeacarotene biosynthesis. Involved in carotenoid biosynthesis. Catalyzes the double cyclization reaction which converts lycopene to beta-carotene and neurosporene to beta-zeacarotene. Major lycopene beta-cyclase that does not seem to be involved in neoxanthin synthesis. Involved in salt tolerance improvement by increasing synthesis of carotenoids, which impairs reactive oxygen species (ROS) and protects the photosynthetic system under salt stress. The chain is Lycopene beta cyclase, chloroplastic from Arabidopsis thaliana (Mouse-ear cress).